Here is a 233-residue protein sequence, read N- to C-terminus: tRNA (guanine-N(7)-)-methyltransferase (233 aa).

4 residues coordinate S-adenosyl-L-methionine: Glu-64, Glu-89, Asp-116, and Asp-138. The active site involves Asp-138. Substrate is bound by residues Lys-142, Asp-174, and 212–215 (TRYE).

This sequence belongs to the class I-like SAM-binding methyltransferase superfamily. TrmB family.

It carries out the reaction guanosine(46) in tRNA + S-adenosyl-L-methionine = N(7)-methylguanosine(46) in tRNA + S-adenosyl-L-homocysteine. It functions in the pathway tRNA modification; N(7)-methylguanine-tRNA biosynthesis. Its function is as follows. Catalyzes the formation of N(7)-methylguanine at position 46 (m7G46) in tRNA. The chain is tRNA (guanine-N(7)-)-methyltransferase from Rhizobium johnstonii (strain DSM 114642 / LMG 32736 / 3841) (Rhizobium leguminosarum bv. viciae).